A 164-amino-acid polypeptide reads, in one-letter code: UPF0304 protein Ent638_2838 (164 aa).

It belongs to the UPF0304 family.

This is UPF0304 protein Ent638_2838 from Enterobacter sp. (strain 638).